A 318-amino-acid chain; its full sequence is Cis-3-alkyl-4-alkyloxetan-2-one decarboxylase (318 aa).

Residues 30-275 (PVVMVHGNPS…ADCGHYILED (246 aa)) enclose the AB hydrolase-1 domain.

Belongs to the AB hydrolase superfamily.

It catalyses the reaction a cis-3-alkyl-4-alkyloxetan-2-one = a cis-alkene + CO2. Involved in olefin biosynthesis. Catalyzes the elimination of carbon dioxide from beta-lactones to form the final olefin product. The S.oneidensis oleABCD genes produce 3,6,9,12,15,19,22,25,28-hentriacontanonaene, which may aid the cells in adapting to a sudden drop in temperature. The sequence is that of Cis-3-alkyl-4-alkyloxetan-2-one decarboxylase from Shewanella oneidensis (strain ATCC 700550 / JCM 31522 / CIP 106686 / LMG 19005 / NCIMB 14063 / MR-1).